We begin with the raw amino-acid sequence, 227 residues long: Ornithine decarboxylase antizyme 1 (227 aa).

Belongs to the ODC antizyme family. As to quaternary structure, interacts with ODC1 and thereby sterically blocks ODC homodimerization. Forms a ternary complex with PSMB4 and OAZ1 before PSMB4 is incorporated into the 20S proteasome. Interacts with AZIN2; this interaction disrupts the interaction between the antizyme and ODC1. Interacts with FAM171A1.

In terms of biological role, ornithine decarboxylase (ODC) antizyme protein that negatively regulates ODC activity and intracellular polyamine biosynthesis and uptake in response to increased intracellular polyamine levels. Binds to ODC monomers, inhibiting the assembly of the functional ODC homodimer, and targets the monomers for ubiquitin-independent proteolytic destruction by the 26S proteasome. Triggers ODC degradation by inducing the exposure of a cryptic proteasome-interacting surface of ODC. Stabilizes AZIN2 by interfering with its ubiquitination. Also inhibits cellular uptake of polyamines by inactivating the polyamine uptake transporter. SMAD1/OAZ1/PSMB4 complex mediates the degradation of the CREBBP/EP300 repressor SNIP1. Involved in the translocation of AZIN2 from ER-Golgi intermediate compartment (ERGIC) to the cytosol. The polypeptide is Ornithine decarboxylase antizyme 1 (Oaz1) (Mus musculus (Mouse)).